Consider the following 268-residue polypeptide: Lipopolysaccharide core heptose(I) kinase WaaP (268 aa).

Phosphotyrosine; by autocatalysis occurs at positions 30, 48, and 98. Residue Asp163 is part of the active site. Residues Tyr165, Tyr211, Tyr231, Tyr258, and Tyr264 each carry the phosphotyrosine; by autocatalysis modification.

It belongs to the protein kinase superfamily. KdkA/RfaP family. In terms of assembly, interacts with acyl-AcpP. The WaaP hydrophobic channel can accommodate acyl chains of different lengths, but myristyl-ACP is likely its physiological binding partner. Mg(2+) serves as cofactor.

It is found in the cytoplasm. The enzyme catalyses an L-alpha-D-Hep-(1-&gt;3)-L-alpha-D-Hep-(1-&gt;5)-[alpha-Kdo-(2-&gt;4)]-alpha-Kdo-(2-&gt;6)-lipid A + ATP = an L-alpha-D-Hep-(1-&gt;3)-4-O-phospho-L-alpha-D-Hep-(1-&gt;5)-[alpha-Kdo-(2-&gt;4)]-alpha-Kdo-(2-&gt;6)-lipid A + ADP + H(+). It catalyses the reaction L-tyrosyl-[protein] + ATP = O-phospho-L-tyrosyl-[protein] + ADP + H(+). It functions in the pathway bacterial outer membrane biogenesis; LPS core biosynthesis. Acylated-acyl carrier protein (acyl-ACP) acts as a very tightly bound cofactor necessary for the production and stability of active WaaP kinase. Its function is as follows. Kinase involved in the biosynthesis of the core oligosaccharide region of lipopolysaccharide (LPS). Catalyzes the phosphorylation of heptose I (HepI), the first heptose added to the Kdo2-lipid A module. Also has protein-tyrosine kinase activity: autophosphorylates on all Tyr residues; in vitro can phosphorylate poly(Glu,Tyr). This chain is Lipopolysaccharide core heptose(I) kinase WaaP, found in Pseudomonas aeruginosa (strain ATCC 15692 / DSM 22644 / CIP 104116 / JCM 14847 / LMG 12228 / 1C / PRS 101 / PAO1).